Consider the following 388-residue polypeptide: Xylose isomerase (388 aa).

Active-site residues include H54 and D57. The Mg(2+) site is built by E181, E217, H220, D245, D255, D257, and D287.

It belongs to the xylose isomerase family. Homotetramer. Mg(2+) is required as a cofactor.

Its subcellular location is the cytoplasm. The enzyme catalyses alpha-D-xylose = alpha-D-xylulofuranose. This Streptomyces thermocyaneoviolaceus protein is Xylose isomerase.